The following is a 788-amino-acid chain: Endonuclease MutS2 (788 aa).

Residue G334–T341 coordinates ATP. The Smr domain occupies L713–Q788.

This sequence belongs to the DNA mismatch repair MutS family. MutS2 subfamily. Homodimer. Binds to stalled ribosomes, contacting rRNA.

Functionally, endonuclease that is involved in the suppression of homologous recombination and thus may have a key role in the control of bacterial genetic diversity. Its function is as follows. Acts as a ribosome collision sensor, splitting the ribosome into its 2 subunits. Detects stalled/collided 70S ribosomes which it binds and splits by an ATP-hydrolysis driven conformational change. Acts upstream of the ribosome quality control system (RQC), a ribosome-associated complex that mediates the extraction of incompletely synthesized nascent chains from stalled ribosomes and their subsequent degradation. Probably generates substrates for RQC. This chain is Endonuclease MutS2, found in Enterococcus faecalis (strain ATCC 700802 / V583).